Here is a 388-residue protein sequence, read N- to C-terminus: Deoxyuridine 5'-triphosphate nucleotidohydrolase (388 aa).

Basic and acidic residues predominate over residues 77–88; it reads EEKYDKEQHPGE. Disordered regions lie at residues 77-96 and 336-388; these read EEKY…SPLP and THTP…PRHP. A compositionally biased stretch (acidic residues) spans 351-363; it reads VDDDVDETEEDEK.

This sequence belongs to the dUTPase family. It depends on Mg(2+) as a cofactor.

It carries out the reaction dUTP + H2O = dUMP + diphosphate + H(+). The protein operates within pyrimidine metabolism; dUMP biosynthesis; dUMP from dCTP (dUTP route): step 2/2. Functionally, involved in nucleotide metabolism: produces dUMP, the immediate precursor of thymidine nucleotides and decreases the intracellular concentration of dUTP to avoid uracil incorporation into viral DNA. This is Deoxyuridine 5'-triphosphate nucleotidohydrolase from Homo sapiens (Human).